The primary structure comprises 342 residues: Glutamyl endopeptidase (342 aa).

The first 29 residues, 1–29 (MKGKFLKVSSLFVATLTTATLVSSPAANA), serve as a signal peptide directing secretion. Positions 30 to 68 (LSSKAMDNHPQQTQSSKQQTPKIKKGGNLKPLEQREHAN) are excised as a propeptide. The segment at 33–63 (KAMDNHPQQTQSSKQQTPKIKKGGNLKPLEQ) is disordered. Over residues 39-50 (PQQTQSSKQQTP) the composition is skewed to low complexity. Residues histidine 119, aspartate 161, and serine 237 each act as charge relay system in the active site. Residues 283–342 (FANDDQPNNPDNPDNPNNPDNPNNPDNPNNPDEPNNPDNPNNPDNPDNGDNNNSDNPDAA) are disordered. Low complexity predominate over residues 286–342 (DDQPNNPDNPDNPNNPDNPNNPDNPNNPDEPNNPDNPNNPDNPDNGDNNNSDNPDAA). 13 repeat units span residues 289-291 (PNN), 292-294 (PDN), 295-297 (PDN), 298-300 (PNN), 301-303 (PDN), 304-306 (PNN), 307-309 (PDN), 310-312 (PNN), 316-318 (PNN), 319-321 (PDN), 322-324 (PNN), 325-327 (PDN), and 328-330 (PDN). Residues 289 to 330 (PNNPDNPDNPNNPDNPNNPDNPNNPDEPNNPDNPNNPDNPDN) form a 13 X 3 AA repeats of P-[DN]-N region.

This sequence belongs to the peptidase S1B family. Post-translationally, proteolytically cleaved by aureolysin (aur). This cleavage leads to the activation of SspA.

The protein localises to the secreted. It catalyses the reaction Preferential cleavage: Glu-|-Xaa, Asp-|-Xaa.. Its function is as follows. Preferentially cleaves peptide bonds on the carboxyl-terminal side of aspartate and glutamate. Along with other extracellular proteases it is involved in colonization and infection of human tissues. Required for proteolytic maturation of thiol protease SspB and inactivation of SspC, an inhibitor of SspB. It is the most important protease for degradation of fibronectin-binding protein (FnBP) and surface protein A, which are involved in adherence to host cells. May also protect bacteria against host defense mechanism by cleaving the immunoglobulin classes IgG, IgA and IgM. May be involved in the stability of secreted lipases. The chain is Glutamyl endopeptidase (sspA) from Staphylococcus aureus (strain Mu50 / ATCC 700699).